The chain runs to 560 residues: Hydroxyisourate hydrolase (560 aa).

Positions 1–31 (MMEPPQTRLMINVFIVSFLALLVNLVVGVLG) are cleaved as a signal peptide. Residues 32-517 (ADNYSRDDFP…LEQDPITCSK (486 aa)) are Peroxisomal-facing. N-linked (GlcNAc...) asparagine glycosylation occurs at asparagine 34. A beta-D-glucoside is bound by residues glutamine 54 and 198–199 (NE). The active-site Proton donor is glutamate 199. Cysteine 218 and cysteine 223 form a disulfide bridge. N-linked (GlcNAc...) asparagine glycosylation is found at asparagine 226 and asparagine 231. Tyrosine 343 contacts a beta-D-glucoside. Residue asparagine 347 is glycosylated (N-linked (GlcNAc...) asparagine). A beta-D-glucoside is bound at residue glutamate 408. The active-site Nucleophile is the glutamate 408. N-linked (GlcNAc...) asparagine glycosylation occurs at asparagine 416. Residue phenylalanine 467 participates in a beta-D-glucoside binding. Asparagine 489 carries N-linked (GlcNAc...) asparagine glycosylation. Residues 518-538 (SPIIFSKISKWVLASLLFLIQ) form a helical membrane-spanning segment. Residues 539–560 (HKIKFMWREPLPGQIPLKLVMF) lie on the Cytoplasmic side of the membrane.

It belongs to the glycosyl hydrolase 1 family. In terms of assembly, monomer. In terms of tissue distribution, highly expressed in uninfected root nodules. Detected in leaves, stems and roots.

The protein resides in the peroxisome membrane. It carries out the reaction 5-hydroxyisourate + H2O = 5-hydroxy-2-oxo-4-ureido-2,5-dihydro-1H-imidazole-5-carboxylate + H(+). The protein operates within purine metabolism; urate degradation; (S)-allantoin from urate: step 2/3. Functionally, involved in the conversion of hydroxyisourate to ureides such as allantoin, the major form of nitrogen transport in legumes. The protein is Hydroxyisourate hydrolase (HIUH) of Glycine max (Soybean).